The chain runs to 370 residues: Anthranilate phosphoribosyltransferase (370 aa).

5-phospho-alpha-D-ribose 1-diphosphate contacts are provided by residues glycine 82, 85–86, threonine 90, 92–95, 110–118, and serine 122; these read GD, NVST, and KHGNRAATS. Glycine 82 provides a ligand contact to anthranilate. Serine 94 contributes to the Mg(2+) binding site. Asparagine 113 is a binding site for anthranilate. An anthranilate-binding site is contributed by arginine 168. Positions 226 and 227 each coordinate Mg(2+).

It belongs to the anthranilate phosphoribosyltransferase family. Homodimer. Mg(2+) is required as a cofactor.

The catalysed reaction is N-(5-phospho-beta-D-ribosyl)anthranilate + diphosphate = 5-phospho-alpha-D-ribose 1-diphosphate + anthranilate. Its pathway is amino-acid biosynthesis; L-tryptophan biosynthesis; L-tryptophan from chorismate: step 2/5. Catalyzes the transfer of the phosphoribosyl group of 5-phosphorylribose-1-pyrophosphate (PRPP) to anthranilate to yield N-(5'-phosphoribosyl)-anthranilate (PRA). This is Anthranilate phosphoribosyltransferase from Methanosarcina acetivorans (strain ATCC 35395 / DSM 2834 / JCM 12185 / C2A).